Here is a 324-residue protein sequence, read N- to C-terminus: NADH-ubiquinone oxidoreductase chain 1 (324 aa).

The next 8 membrane-spanning stretches (helical) occupy residues 9 to 29, 76 to 96, 106 to 126, 146 to 166, 177 to 197, 228 to 248, 259 to 279, and 299 to 319; these read LINP…LTLL, LFLV…APMP, LGVL…LGSG, ISYE…WGGY, ALWL…STLA, LLFL…AILF, ELTT…FLWV, and FLPL…AFAG.

Belongs to the complex I subunit 1 family.

The protein resides in the mitochondrion inner membrane. It carries out the reaction a ubiquinone + NADH + 5 H(+)(in) = a ubiquinol + NAD(+) + 4 H(+)(out). In terms of biological role, core subunit of the mitochondrial membrane respiratory chain NADH dehydrogenase (Complex I) that is believed to belong to the minimal assembly required for catalysis. Complex I functions in the transfer of electrons from NADH to the respiratory chain. The immediate electron acceptor for the enzyme is believed to be ubiquinone. This Formosania lacustris (Oriental stream loach) protein is NADH-ubiquinone oxidoreductase chain 1 (MT-ND1).